The chain runs to 184 residues: Photosystem I assembly protein Ycf4 (184 aa).

2 helical membrane passes run 21–43 (NFFW…ISSY) and 58–78 (LFVP…FISS).

This sequence belongs to the Ycf4 family.

The protein resides in the plastid. It is found in the chloroplast thylakoid membrane. In terms of biological role, seems to be required for the assembly of the photosystem I complex. In Pinus thunbergii (Japanese black pine), this protein is Photosystem I assembly protein Ycf4.